A 521-amino-acid polypeptide reads, in one-letter code: Bifunctional purine biosynthesis protein PurH (521 aa).

Residues 1–147 form the MGS-like domain; it reads MAKITRALIS…KNNADVTVVV (147 aa).

This sequence belongs to the PurH family.

It catalyses the reaction (6R)-10-formyltetrahydrofolate + 5-amino-1-(5-phospho-beta-D-ribosyl)imidazole-4-carboxamide = 5-formamido-1-(5-phospho-D-ribosyl)imidazole-4-carboxamide + (6S)-5,6,7,8-tetrahydrofolate. It carries out the reaction IMP + H2O = 5-formamido-1-(5-phospho-D-ribosyl)imidazole-4-carboxamide. The protein operates within purine metabolism; IMP biosynthesis via de novo pathway; 5-formamido-1-(5-phospho-D-ribosyl)imidazole-4-carboxamide from 5-amino-1-(5-phospho-D-ribosyl)imidazole-4-carboxamide (10-formyl THF route): step 1/1. It functions in the pathway purine metabolism; IMP biosynthesis via de novo pathway; IMP from 5-formamido-1-(5-phospho-D-ribosyl)imidazole-4-carboxamide: step 1/1. This is Bifunctional purine biosynthesis protein PurH from Geotalea uraniireducens (strain Rf4) (Geobacter uraniireducens).